A 262-amino-acid polypeptide reads, in one-letter code: 7alpha-hydroxysteroid dehydrogenase (262 aa).

Residues 13–18 (SSTRGI), Arg-38, 63–64 (NA), and Asn-90 contribute to the NADP(+) site. 2 residues coordinate taurochenodeoxycholate: Thr-145 and Tyr-158. Residues Tyr-158, Lys-162, and 191 to 195 (IGTRA) contribute to the NADP(+) site. Residue Tyr-158 is the Proton acceptor of the active site.

This sequence belongs to the short-chain dehydrogenases/reductases (SDR) family. In terms of assembly, homotetramer. A dynamic equilibrium between dimers and tetramers seems to exist.

The catalysed reaction is cholate + NADP(+) = 3alpha,12alpha-dihydroxy-7-oxo-5beta-cholanate + NADPH + H(+). It catalyses the reaction chenodeoxycholate + NADP(+) = 7-oxolithocholate + NADPH + H(+). It carries out the reaction 3alpha,7alpha-dihydroxy-12-oxo-5beta-cholanate + NADP(+) = 7,12-dioxo-lithocholate + NADPH + H(+). The enzyme catalyses 7alpha-hydroxy-3,12-dioxo-5beta-cholanate + NADP(+) = dehydrocholate + NADPH + H(+). The catalysed reaction is glycochenodeoxycholate + NADP(+) = 7-oxoglycolithocholate + NADPH + H(+). It catalyses the reaction taurochenodeoxycholate + NADP(+) = 7-oxotaurolithocholate + NADPH + H(+). Activated by metal ions such as Mg(2+), Na(+) and K(+). In terms of biological role, 7alpha-hydroxysteroid dehydrogenase that catalyzes the NADP(+)-dependent oxidation of the 7alpha-hydroxy group of 7alpha-hydroxysteroids, such as cholate, chenodeoxycholate, glycochenodeoxycholate and taurochenodeoxycholate, to the corresponding 7-oxosteroids. Is also able to catalyze the reverse reduction reactions. Together with 7beta-HSDH encoded in the adjacent gene, is likely involved in the epimerization of the hydroxy group at C-7 of primary bile acids through 7-keto bile acid intermediates. This Clostridium sardiniense (Clostridium absonum) protein is 7alpha-hydroxysteroid dehydrogenase.